Consider the following 297-residue polypeptide: Alpha-tubulin N-acetyltransferase 1 (297 aa).

Residues 1–186 (MEFDFDVHKI…NNFVVFDGFF (186 aa)) form the N-acetyltransferase domain. Residues 120–133 (FYIH…GFGK) and 156–165 (SEKFLSFLRK) each bind acetyl-CoA. The tract at residues 269 to 297 (LHRTANSEQEDHSQRRRTSSLNRPQSIHH) is disordered. Polar residues predominate over residues 287-297 (SSLNRPQSIHH).

This sequence belongs to the acetyltransferase ATAT1 family.

It localises to the cytoplasm. The protein localises to the membrane. Its subcellular location is the clathrin-coated pit. It is found in the cell junction. The protein resides in the focal adhesion. It localises to the cell projection. The protein localises to the axon. Its subcellular location is the cytoskeleton. It is found in the spindle. It catalyses the reaction L-lysyl-[alpha-tubulin] + acetyl-CoA = N(6)-acetyl-L-lysyl-[alpha-tubulin] + CoA + H(+). Its function is as follows. Specifically acetylates 'Lys-40' in alpha-tubulin on the lumenal side of microtubules. Promotes microtubule destabilization and accelerates microtubule dynamics; this activity may be independent of acetylation activity. Acetylates alpha-tubulin with a slow enzymatic rate, due to a catalytic site that is not optimized for acetyl transfer. Enters the microtubule through each end and diffuses quickly throughout the lumen of microtubules. Acetylates only long/old microtubules because of its slow acetylation rate since it does not have time to act on dynamically unstable microtubules before the enzyme is released. May be involved in neuron development. This Xenopus tropicalis (Western clawed frog) protein is Alpha-tubulin N-acetyltransferase 1.